The following is a 351-amino-acid chain: Calcium release-activated calcium channel protein 1 (351 aa).

Over residues 1 to 21 (MSVWTTANNSGLETPTKSPIT) the composition is skewed to polar residues. Disordered stretches follow at residues 1-39 (MSVWTTANNSGLETPTKSPITSSVPRAARSSAVITTGNH) and 71-141 (HAHP…EDLH). Topologically, residues 1–163 (MSVWTTANNS…SRAKLKASSK (163 aa)) are cytoplasmic. Low complexity-rich tracts occupy residues 22–33 (SSVPRAARSSAV) and 80–93 (SNSPTGSGSNSNNS). Residues 94 to 106 (AGFQRTSISNSLL) show a composition bias toward polar residues. A helical membrane pass occupies residues 164 to 181 (TSALLSGFAMVAMVEVQL). At 182-191 (DHDTNVPPGM) the chain is on the extracellular side. A helical membrane pass occupies residues 192–212 (LIAFAICTTLLVAVHMLALMI). Topologically, residues 213 to 248 (STCILPNIETVCNLHSISLVHESPHERLHWYIETAW) are cytoplasmic. Residues 249–269 (AFSTLLGLILFLLEIAILCWV) form a helical membrane-spanning segment. Topologically, residues 270–277 (KFYDLSPP) are extracellular. The chain crosses the membrane as a helical span at residues 278–298 (AAWSACVVLIPVMIIFMAFAI). Residues 299–351 (HFYRSLVSHKYEVTVSGIRELEMLKEQMEQDHLEHHNNIRNNGMNYGASGDIV) are Cytoplasmic-facing.

The protein belongs to the Orai family. In terms of assembly, hexamer.

It localises to the cell membrane. It catalyses the reaction Ca(2+)(in) = Ca(2+)(out). Pore-forming subunit of inward rectifying Ca(2+) release-activated Ca(2+) (CRAC) channels. Assembles in hexameric CRAC channels that mediate Ca(2+) influx upon depletion of endoplasmic reticulum Ca(2+) store and channel activation by Ca(2+) sensor Stim, a process known as store-operated Ca(2+) entry (SOCE). Regulates transcription factor NFAT nuclear import. This is Calcium release-activated calcium channel protein 1 from Drosophila melanogaster (Fruit fly).